The chain runs to 198 residues: MIDFDGYRPNVGIVICNSKGQVLWAKRYGQNSWQFPQGGINDNESAEQAMYRELFEEVGLSPKDVKILYISKHWLRYKLPKRLLRYDSKPVCIGQKQRWFLLQLVSDEKNINMQSSKSPEFDGWRWVSFWYPVRQVVSFKKEVYRKAMKEFASVLFDGAKENLLSSKSNESDLKTHHTTKKSTFLTKHSKKHFHKSRG.

Positions 6-149 constitute a Nudix hydrolase domain; the sequence is GYRPNVGIVI…KKEVYRKAMK (144 aa). The Nudix box signature appears at 38–59; that stretch reads GGINDNESAEQAMYRELFEEVG.

It belongs to the Nudix hydrolase family. RppH subfamily. It depends on a divalent metal cation as a cofactor.

Accelerates the degradation of transcripts by removing pyrophosphate from the 5'-end of triphosphorylated RNA, leading to a more labile monophosphorylated state that can stimulate subsequent ribonuclease cleavage. In Pasteurella multocida (strain Pm70), this protein is RNA pyrophosphohydrolase.